The chain runs to 294 residues: 4-hydroxy-tetrahydrodipicolinate synthase (294 aa).

T46 lines the pyruvate pocket. Y134 (proton donor/acceptor) is an active-site residue. K163 functions as the Schiff-base intermediate with substrate in the catalytic mechanism. I205 is a binding site for pyruvate.

The protein belongs to the DapA family. In terms of assembly, homotetramer; dimer of dimers.

Its subcellular location is the cytoplasm. The enzyme catalyses L-aspartate 4-semialdehyde + pyruvate = (2S,4S)-4-hydroxy-2,3,4,5-tetrahydrodipicolinate + H2O + H(+). Its pathway is amino-acid biosynthesis; L-lysine biosynthesis via DAP pathway; (S)-tetrahydrodipicolinate from L-aspartate: step 3/4. Catalyzes the condensation of (S)-aspartate-beta-semialdehyde [(S)-ASA] and pyruvate to 4-hydroxy-tetrahydrodipicolinate (HTPA). The sequence is that of 4-hydroxy-tetrahydrodipicolinate synthase from Clostridium tetani (strain Massachusetts / E88).